A 114-amino-acid chain; its full sequence is Small ribosomal subunit protein uS17 (114 aa).

This sequence belongs to the universal ribosomal protein uS17 family. As to quaternary structure, part of the 30S ribosomal subunit.

One of the primary rRNA binding proteins, it binds specifically to the 5'-end of 16S ribosomal RNA. In Sulfolobus acidocaldarius (strain ATCC 33909 / DSM 639 / JCM 8929 / NBRC 15157 / NCIMB 11770), this protein is Small ribosomal subunit protein uS17.